The following is a 500-amino-acid chain: Glutamate decarboxylase 3 (500 aa).

The residue at position 8 (Ser-8) is a Phosphoserine. N6-(pyridoxal phosphate)lysine is present on Lys-277.

It belongs to the group II decarboxylase family. In terms of assembly, homohexamer. Interacts with calmodulin. It depends on pyridoxal 5'-phosphate as a cofactor. In terms of tissue distribution, expressed at low levels in siliques.

It catalyses the reaction L-glutamate + H(+) = 4-aminobutanoate + CO2. Functionally, catalyzes the production of GABA. The calmodulin-binding is calcium-dependent and it is proposed that this may, directly or indirectly, form a calcium regulated control of GABA biosynthesis. This Arabidopsis thaliana (Mouse-ear cress) protein is Glutamate decarboxylase 3 (GAD3).